Consider the following 536-residue polypeptide: Xylulose kinase (536 aa).

Substrate is bound by residues His99, Arg170, Asp280, and Asn281. ATP is bound by residues Trp355, 441–442 (GA), and Asn445.

The protein belongs to the FGGY kinase family. In terms of assembly, monomer.

It carries out the reaction D-xylulose + ATP = D-xylulose 5-phosphate + ADP + H(+). Functionally, phosphorylates D-xylulose to produce D-xylulose 5-phosphate, a molecule that may play an important role in the regulation of glucose metabolism and lipogenesis. The protein is Xylulose kinase (XYLB) of Homo sapiens (Human).